The primary structure comprises 53 residues: UPF0181 protein VC_A0569 (53 aa).

It belongs to the UPF0181 family.

This is UPF0181 protein VC_A0569 from Vibrio cholerae serotype O1 (strain ATCC 39315 / El Tor Inaba N16961).